Reading from the N-terminus, the 57-residue chain is UPF0391 membrane protein Smed_4051 (57 aa).

2 consecutive transmembrane segments (helical) span residues 4-24 (WALIFFVISLIAGFLGFSGIS) and 33-53 (ILFYIAVIIFLVFLVLALAVG).

This sequence belongs to the UPF0391 family.

It is found in the cell membrane. The sequence is that of UPF0391 membrane protein Smed_4051 from Sinorhizobium medicae (strain WSM419) (Ensifer medicae).